Consider the following 253-residue polypeptide: Probable transcriptional regulatory protein KRH_13670 (253 aa).

It belongs to the TACO1 family.

The protein localises to the cytoplasm. The sequence is that of Probable transcriptional regulatory protein KRH_13670 from Kocuria rhizophila (strain ATCC 9341 / DSM 348 / NBRC 103217 / DC2201).